The sequence spans 73 residues: Small ribosomal subunit protein bS18B (73 aa).

The protein belongs to the bacterial ribosomal protein bS18 family. As to quaternary structure, part of the 30S ribosomal subunit. Forms a tight heterodimer with protein bS6.

Functionally, binds as a heterodimer with protein bS6 to the central domain of the 16S rRNA, where it helps stabilize the platform of the 30S subunit. In Frankia alni (strain DSM 45986 / CECT 9034 / ACN14a), this protein is Small ribosomal subunit protein bS18B.